We begin with the raw amino-acid sequence, 278 residues long: Transmembrane protein 41B (278 aa).

The disordered stretch occupies residues M1–H31. The next 6 membrane-spanning stretches (helical) occupy residues M39 to Y59, F96 to I116, C142 to V162, L184 to I204, P212 to I232, and S249 to F269. The VTT domain; required for its function in autophagy stretch occupies residues G127–L238.

This sequence belongs to the TMEM41 family.

It localises to the endoplasmic reticulum membrane. Its subcellular location is the endomembrane system. It catalyses the reaction a 1,2-diacyl-sn-glycero-3-phospho-L-serine(in) = a 1,2-diacyl-sn-glycero-3-phospho-L-serine(out). The catalysed reaction is cholesterol(in) = cholesterol(out). The enzyme catalyses a 1,2-diacyl-sn-glycero-3-phosphocholine(in) = a 1,2-diacyl-sn-glycero-3-phosphocholine(out). It carries out the reaction a 1,2-diacyl-sn-glycero-3-phosphoethanolamine(in) = a 1,2-diacyl-sn-glycero-3-phosphoethanolamine(out). Phospholipid scramblase involved in lipid homeostasis and membrane dynamics processes. Has phospholipid scramblase activity toward cholesterol and phosphatidylserine, as well as phosphatidylethanolamine and phosphatidylcholine. Required for autophagosome formation: participates in early stages of autophagosome biogenesis at the endoplasmic reticulum (ER) membrane by reequilibrating the leaflets of the ER as lipids are extracted by atg2 (atg2a or atg2b) to mediate autophagosome assembly. In addition to autophagy, involved in other processes in which phospholipid scramblase activity is required. Required for normal motor neuron development. This Xenopus laevis (African clawed frog) protein is Transmembrane protein 41B.